Reading from the N-terminus, the 122-residue chain is Large ribosomal subunit protein uL14 (122 aa).

This sequence belongs to the universal ribosomal protein uL14 family. As to quaternary structure, part of the 50S ribosomal subunit. Forms a cluster with proteins L3 and L19. In the 70S ribosome, L14 and L19 interact and together make contacts with the 16S rRNA in bridges B5 and B8.

Binds to 23S rRNA. Forms part of two intersubunit bridges in the 70S ribosome. The chain is Large ribosomal subunit protein uL14 from Desulfitobacterium hafniense (strain DSM 10664 / DCB-2).